The chain runs to 281 residues: Cytosolic Fe-S cluster assembly factor CFD1 (281 aa).

24 to 31 (GKGGVGKS) provides a ligand contact to ATP. Positions 201 and 204 each coordinate [4Fe-4S] cluster.

The protein belongs to the Mrp/NBP35 ATP-binding proteins family. NUBP2/CFD1 subfamily. Heterotetramer of 2 NBP35 and 2 CFD1 chains. [4Fe-4S] cluster is required as a cofactor.

The protein localises to the cytoplasm. Functionally, component of the cytosolic iron-sulfur (Fe/S) protein assembly (CIA) machinery. Required for maturation of extramitochondrial Fe-S proteins. The NBP35-CFD1 heterotetramer forms a Fe-S scaffold complex, mediating the de novo assembly of an Fe-S cluster and its transfer to target apoproteins. Required for biogenesis and export of both ribosomal subunits, which may reflect a role in assembly of the Fe/S clusters in RLI1, a protein which performs rRNA processing and ribosome export. The chain is Cytosolic Fe-S cluster assembly factor CFD1 from Eremothecium gossypii (strain ATCC 10895 / CBS 109.51 / FGSC 9923 / NRRL Y-1056) (Yeast).